The sequence spans 763 residues: ATP-dependent RNA helicase SUV3 homolog, mitochondrial (763 aa).

A mitochondrion-targeting transit peptide spans 1 to 43 (MQNCRRCISLTGLLRMTLYLRPSFSIDLSLRRLHRAAFLFSRK). The Helicase ATP-binding domain occupies 181–321 (NARAITRKIV…ALDLLQKICE (141 aa)). An ATP-binding site is contributed by 194–201 (GPTNSGKT). One can recognise a Helicase C-terminal domain in the interval 330 to 508 (RLYDRLTELT…PTADQIELYA (179 aa)). Positions 724–763 (AQQLGKSNSQSNENSEPVVNSDDEDNYSGIGRKTRKKRRK) are disordered. Residues 727-741 (LGKSNSQSNENSEPV) show a composition bias toward polar residues.

Belongs to the helicase family. It depends on Mg(2+) as a cofactor. Mn(2+) serves as cofactor.

The protein localises to the mitochondrion. It catalyses the reaction ATP + H2O = ADP + phosphate + H(+). Major helicase player in mitochondrial RNA metabolism and maintenance. Likely component of the mitochondrial degradosome (mtEXO) complex, that degrades 3' overhang double-stranded RNA with a 3'-to-5' directionality in an ATP-dependent manner. ATPase and ATP-dependent multisubstrate helicase, able to unwind double-stranded (ds) DNA and RNA, and RNA/DNA heteroduplexes in the 5'-to-3' direction. Regulates mRNA stability and is required for the correct processing and maturation of mitochondrial transcripts. In Drosophila melanogaster (Fruit fly), this protein is ATP-dependent RNA helicase SUV3 homolog, mitochondrial.